The chain runs to 112 residues: Cortistatin (112 aa).

A signal peptide spans 1-27; that stretch reads MGGCSTRGKRPSALSLLLLLLLSGIAA. Positions 28-81 are excised as a propeptide; that stretch reads SALPLESGPTGQDSVQDATGGRRTGLLTFLAWWHEWASQDSSSTAFEGGTPELS. The segment at 66 to 101 is disordered; the sequence is QDSSSTAFEGGTPELSKRQERPPLQQPPHRDKKPCK. Cys100 and Cys111 are oxidised to a cystine.

The protein belongs to the somatostatin family. In terms of tissue distribution, interneurons in the cerebral cortex and hippocampus.

It is found in the secreted. Functionally, neuropeptide with neuronal depressant and sleep-modulating properties. The protein is Cortistatin (Cort) of Rattus norvegicus (Rat).